We begin with the raw amino-acid sequence, 265 residues long: 3-methyl-2-oxobutanoate hydroxymethyltransferase (265 aa).

Mg(2+)-binding residues include Asp-45 and Asp-84. 3-methyl-2-oxobutanoate-binding positions include 45-46, Asp-84, and Lys-112; that span reads DS. A Mg(2+)-binding site is contributed by Glu-114. Glu-181 (proton acceptor) is an active-site residue.

This sequence belongs to the PanB family. As to quaternary structure, homodecamer; pentamer of dimers. Mg(2+) serves as cofactor.

Its subcellular location is the cytoplasm. The enzyme catalyses 3-methyl-2-oxobutanoate + (6R)-5,10-methylene-5,6,7,8-tetrahydrofolate + H2O = 2-dehydropantoate + (6S)-5,6,7,8-tetrahydrofolate. The protein operates within cofactor biosynthesis; (R)-pantothenate biosynthesis; (R)-pantoate from 3-methyl-2-oxobutanoate: step 1/2. In terms of biological role, catalyzes the reversible reaction in which hydroxymethyl group from 5,10-methylenetetrahydrofolate is transferred onto alpha-ketoisovalerate to form ketopantoate. This is 3-methyl-2-oxobutanoate hydroxymethyltransferase from Pectobacterium carotovorum subsp. carotovorum (strain PC1).